Consider the following 201-residue polypeptide: Probable molybdenum cofactor guanylyltransferase (201 aa).

Residues 6–8 (LAG), Lys18, Asp67, and Asp92 each bind GTP. Asp92 contacts Mg(2+).

Belongs to the MobA family. It depends on Mg(2+) as a cofactor.

Its subcellular location is the cytoplasm. The catalysed reaction is Mo-molybdopterin + GTP + H(+) = Mo-molybdopterin guanine dinucleotide + diphosphate. Functionally, transfers a GMP moiety from GTP to Mo-molybdopterin (Mo-MPT) cofactor (Moco or molybdenum cofactor) to form Mo-molybdopterin guanine dinucleotide (Mo-MGD) cofactor. The polypeptide is Probable molybdenum cofactor guanylyltransferase (Thermococcus kodakarensis (strain ATCC BAA-918 / JCM 12380 / KOD1) (Pyrococcus kodakaraensis (strain KOD1))).